A 186-amino-acid polypeptide reads, in one-letter code: Putative 3-methyladenine DNA glycosylase (186 aa).

Belongs to the DNA glycosylase MPG family.

This Borrelia garinii subsp. bavariensis (strain ATCC BAA-2496 / DSM 23469 / PBi) (Borreliella bavariensis) protein is Putative 3-methyladenine DNA glycosylase.